A 214-amino-acid polypeptide reads, in one-letter code: MDAATRRSMLRNALLLGLFALVGVGLVALVQQFTEARIAEAQREARGRALLELLPPGSYDNHPLDSQVPTFAPKLLGLDAPRPAYVARLHGQASAVILQASAPDGYSGAIQLLVGVTAQGRLLGVRVVAHKETPGLGDRIELAKSPWVHGFDGKSLGDPADAGWAVKKDGGTFDQFAGATVTPRAVVRAVHKALRYFDANRERLLAPEEAAGHE.

A helical transmembrane segment spans residues alanine 13 to phenylalanine 33. Threonine 180 is modified (FMN phosphoryl threonine).

The protein belongs to the RnfG family. The complex is composed of six subunits: RnfA, RnfB, RnfC, RnfD, RnfE and RnfG. FMN serves as cofactor.

Its subcellular location is the cell inner membrane. Part of a membrane-bound complex that couples electron transfer with translocation of ions across the membrane. The sequence is that of Ion-translocating oxidoreductase complex subunit G from Pseudomonas aeruginosa (strain UCBPP-PA14).